The following is a 288-amino-acid chain: Bifunctional protein FolD (288 aa).

Residues 164-166 and Ile230 contribute to the NADP(+) site; that span reads GTS.

This sequence belongs to the tetrahydrofolate dehydrogenase/cyclohydrolase family. In terms of assembly, homodimer.

It catalyses the reaction (6R)-5,10-methylene-5,6,7,8-tetrahydrofolate + NADP(+) = (6R)-5,10-methenyltetrahydrofolate + NADPH. It carries out the reaction (6R)-5,10-methenyltetrahydrofolate + H2O = (6R)-10-formyltetrahydrofolate + H(+). It participates in one-carbon metabolism; tetrahydrofolate interconversion. In terms of biological role, catalyzes the oxidation of 5,10-methylenetetrahydrofolate to 5,10-methenyltetrahydrofolate and then the hydrolysis of 5,10-methenyltetrahydrofolate to 10-formyltetrahydrofolate. The chain is Bifunctional protein FolD from Mycoplasma mycoides subsp. mycoides SC (strain CCUG 32753 / NCTC 10114 / PG1).